The chain runs to 111 residues: Universal stress protein B (111 aa).

Helical transmembrane passes span 1–21 (MFST…NMMR) and 90–110 (FILT…MLIW).

Belongs to the universal stress protein B family.

It localises to the cell inner membrane. This chain is Universal stress protein B, found in Photorhabdus laumondii subsp. laumondii (strain DSM 15139 / CIP 105565 / TT01) (Photorhabdus luminescens subsp. laumondii).